Reading from the N-terminus, the 457-residue chain is MRYLCRAQLLSLLLLPLLKARLSVPAHPIPQSFLPLMISTWNYTDANREAWTVLRQGPRRTRQAVIQGCLHCQNSNSCGRLLGGHSAPDSSGGITLEAALIDGANMDYGAVAGMAGIRNAIGVAHDVLRYTNHSLLVGEAAARFAEAMGHKKEVHSLSTTLDVLLPWLLGKCQPNFWRNVRPLANDSCGTFSPLPQEQQQREMRQEYPIEPGHHDQVGFLALDTEGHLHAASLSSGARFRIPGRVGDAAVPGAGIYADNQVGGALATGDGDVLMRFLPALLAVEALRAGQSPASAAEAVMRRLLRHHTEFNGGLVVVSRLGVYSAACAGLDEFQFVVSGESSGRSMRRVEGIKCLDRHEVVTGGPRGNFYVVSKKIWAAGGEDVLVQRVEKITLNEGVDSREFEEEYLEDKDAEIDVDEGEKAEEVRSLLDESPGDLLLHQLGLAPPFPFRFPFIYF.

A signal peptide spans 1-20 (MRYLCRAQLLSLLLLPLLKA). Disulfide bonds link Cys72–Cys78, Cys172–Cys188, and Cys327–Cys354.

This sequence belongs to the Ntn-hydrolase family.

The chain is L-asparaginase-like protein GL17509 from Drosophila persimilis (Fruit fly).